The primary structure comprises 299 residues: Oxygen-dependent coproporphyrinogen-III oxidase (299 aa).

Ser92 contributes to the substrate binding site. A divalent metal cation contacts are provided by His96 and His106. His106 functions as the Proton donor in the catalytic mechanism. 108-110 (NVR) serves as a coordination point for substrate. Positions 145 and 175 each coordinate a divalent metal cation. Residues 240 to 275 (YVEFNLVWDRGTLFGLQTGGRTESILMSMPPLVRWE) are important for dimerization. Substrate is bound at residue 258-260 (GGR).

This sequence belongs to the aerobic coproporphyrinogen-III oxidase family. In terms of assembly, homodimer. A divalent metal cation is required as a cofactor.

It localises to the cytoplasm. The enzyme catalyses coproporphyrinogen III + O2 + 2 H(+) = protoporphyrinogen IX + 2 CO2 + 2 H2O. The protein operates within porphyrin-containing compound metabolism; protoporphyrin-IX biosynthesis; protoporphyrinogen-IX from coproporphyrinogen-III (O2 route): step 1/1. In terms of biological role, involved in the heme biosynthesis. Catalyzes the aerobic oxidative decarboxylation of propionate groups of rings A and B of coproporphyrinogen-III to yield the vinyl groups in protoporphyrinogen-IX. The sequence is that of Oxygen-dependent coproporphyrinogen-III oxidase from Klebsiella pneumoniae (strain 342).